The sequence spans 340 residues: Ketol-acid reductoisomerase (NADP(+)) (340 aa).

The 181-residue stretch at 3–183 (INVFYDKDCN…GGGRTGIIET (181 aa)) folds into the KARI N-terminal Rossmann domain. Residues 26–29 (FGSQ), Arg-49, Ser-54, and 84–87 (DENQ) each bind NADP(+). His-109 is a catalytic residue. Gly-135 lines the NADP(+) pocket. Residues 184–329 (TFKDETETDL…VKLRNMMPWI (146 aa)) enclose the KARI C-terminal knotted domain. Mg(2+) contacts are provided by Asp-192, Glu-196, Glu-228, and Glu-232. Ser-253 is a binding site for substrate.

The protein belongs to the ketol-acid reductoisomerase family. The cofactor is Mg(2+).

It catalyses the reaction (2R)-2,3-dihydroxy-3-methylbutanoate + NADP(+) = (2S)-2-acetolactate + NADPH + H(+). The catalysed reaction is (2R,3R)-2,3-dihydroxy-3-methylpentanoate + NADP(+) = (S)-2-ethyl-2-hydroxy-3-oxobutanoate + NADPH + H(+). It functions in the pathway amino-acid biosynthesis; L-isoleucine biosynthesis; L-isoleucine from 2-oxobutanoate: step 2/4. Its pathway is amino-acid biosynthesis; L-valine biosynthesis; L-valine from pyruvate: step 2/4. Involved in the biosynthesis of branched-chain amino acids (BCAA). Catalyzes an alkyl-migration followed by a ketol-acid reduction of (S)-2-acetolactate (S2AL) to yield (R)-2,3-dihydroxy-isovalerate. In the isomerase reaction, S2AL is rearranged via a Mg-dependent methyl migration to produce 3-hydroxy-3-methyl-2-ketobutyrate (HMKB). In the reductase reaction, this 2-ketoacid undergoes a metal-dependent reduction by NADPH to yield (R)-2,3-dihydroxy-isovalerate. The protein is Ketol-acid reductoisomerase (NADP(+)) of Aliarcobacter butzleri (strain RM4018) (Arcobacter butzleri).